Consider the following 245-residue polypeptide: 1-(5-phosphoribosyl)-5-[(5-phosphoribosylamino)methylideneamino] imidazole-4-carboxamide isomerase (245 aa).

Aspartate 7 serves as the catalytic Proton acceptor. Aspartate 129 functions as the Proton donor in the catalytic mechanism.

The protein belongs to the HisA/HisF family.

The protein localises to the cytoplasm. The enzyme catalyses 1-(5-phospho-beta-D-ribosyl)-5-[(5-phospho-beta-D-ribosylamino)methylideneamino]imidazole-4-carboxamide = 5-[(5-phospho-1-deoxy-D-ribulos-1-ylimino)methylamino]-1-(5-phospho-beta-D-ribosyl)imidazole-4-carboxamide. It participates in amino-acid biosynthesis; L-histidine biosynthesis; L-histidine from 5-phospho-alpha-D-ribose 1-diphosphate: step 4/9. This Pectobacterium carotovorum subsp. carotovorum (strain PC1) protein is 1-(5-phosphoribosyl)-5-[(5-phosphoribosylamino)methylideneamino] imidazole-4-carboxamide isomerase.